The primary structure comprises 371 residues: Cytochrome b (371 aa).

The next 4 helical transmembrane spans lie at 25–45 (FGSMLLTCLMLQVLTGFFLAI), 69–90 (WIMQNTHAIGASLFFICIYIHI), 105–125 (WLSGVTLLMTLMATAFFGYVL), and 170–190 (FFALHFILPFIIISLSSIHII). Heme b is bound by residues His-75 and His-89. Positions 174 and 188 each coordinate heme b. His-193 lines the a ubiquinone pocket. Transmembrane regions (helical) follow at residues 218–238 (YKDLMTTTSMIILLFIILSFS), 280–300 (LGGTLALLMSILILTLPPFTH), 312–332 (LSQTLFWTLIATFVMITWTAT), and 339–358 (FITISQLTSIFYFSFFIMNP).

Belongs to the cytochrome b family. As to quaternary structure, the cytochrome bc1 complex contains 3 respiratory subunits (MT-CYB, CYC1 and UQCRFS1), 2 core proteins (UQCRC1 and UQCRC2) and probably 6 low-molecular weight proteins. Heme b serves as cofactor.

It is found in the mitochondrion inner membrane. Functionally, component of the ubiquinol-cytochrome c reductase complex (complex III or cytochrome b-c1 complex) that is part of the mitochondrial respiratory chain. The b-c1 complex mediates electron transfer from ubiquinol to cytochrome c. Contributes to the generation of a proton gradient across the mitochondrial membrane that is then used for ATP synthesis. The chain is Cytochrome b (MT-CYB) from Micrurus fulvius (Eastern coral snake).